The following is a 1035-amino-acid chain: Cell-division control histidine kinase PdhS (1035 aa).

An important for polar localization region spans residues 1 to 613 (MSGSYPFIDI…HADGSEEPVD (613 aa)). The interval 500 to 533 (QGLANTRAESETPVSETSSIEPVEPTPPVKTRSE) is disordered. The tract at residues 614–1035 (AHLNAIAWRG…VFPPTRVLAD (422 aa)) is interaction with DivK. In terms of domain architecture, PAS spans 659–730 (HVEELKTILD…YLHGLSGNGV (72 aa)). The Histidine kinase domain maps to 802–1031 (RISHEIRTPL…VVEIVFPPTR (230 aa)). Phosphohistidine; by autocatalysis is present on H805.

In terms of assembly, interacts with DivK.

The protein resides in the cytoplasm. It catalyses the reaction ATP + protein L-histidine = ADP + protein N-phospho-L-histidine.. In terms of biological role, functions as a polar differentiation marker. Essential protein that, by localizing in the old pole of dividing cells, controls cell division and maturation, probably through control of DivK phosphorylation status and cellular distribution, which in turn regulates CtrA, a transcriptional regulator of the minB operon. The asymmetrical localization of this protein is probably required for cells to enter a new division cycle. In Brucella canis (strain ATCC 23365 / NCTC 10854 / RM-666), this protein is Cell-division control histidine kinase PdhS (pdhS).